The chain runs to 106 residues: Pyrimidine/purine nucleoside phosphorylase (106 aa).

The protein belongs to the nucleoside phosphorylase PpnP family.

The catalysed reaction is a purine D-ribonucleoside + phosphate = a purine nucleobase + alpha-D-ribose 1-phosphate. It catalyses the reaction adenosine + phosphate = alpha-D-ribose 1-phosphate + adenine. The enzyme catalyses cytidine + phosphate = cytosine + alpha-D-ribose 1-phosphate. It carries out the reaction guanosine + phosphate = alpha-D-ribose 1-phosphate + guanine. The catalysed reaction is inosine + phosphate = alpha-D-ribose 1-phosphate + hypoxanthine. It catalyses the reaction thymidine + phosphate = 2-deoxy-alpha-D-ribose 1-phosphate + thymine. The enzyme catalyses uridine + phosphate = alpha-D-ribose 1-phosphate + uracil. It carries out the reaction xanthosine + phosphate = alpha-D-ribose 1-phosphate + xanthine. In terms of biological role, catalyzes the phosphorolysis of diverse nucleosides, yielding D-ribose 1-phosphate and the respective free bases. Can use uridine, adenosine, guanosine, cytidine, thymidine, inosine and xanthosine as substrates. Also catalyzes the reverse reactions. The protein is Pyrimidine/purine nucleoside phosphorylase of Leptospira interrogans serogroup Icterohaemorrhagiae serovar copenhageni (strain Fiocruz L1-130).